Here is a 216-residue protein sequence, read N- to C-terminus: Transmembrane emp24 domain-containing protein eca (216 aa).

A signal peptide spans 1–20 (MRDQFISLALILCVLHSACG). Over 21 to 182 (LYFHISETER…FRHTSESTNS (162 aa)) the chain is Lumenal. Residues 30-126 (RKCFIEEVPD…QLRVHLDIQV (97 aa)) form the GOLD domain. A coiled-coil region spans residues 134-164 (ANVAQKEKLTELQLRIRQLLDQVEQITKEQN). Residues 183 to 203 (RVLWWSLAQTIVLVCMGFWQM) form a helical membrane-spanning segment. Residues 204–216 (RHLKSFFEAKKLV) are Cytoplasmic-facing. The short motif at 213 to 216 (KKLV) is the Prevents secretion from ER element.

It belongs to the EMP24/GP25L family.

The protein localises to the endoplasmic reticulum membrane. Eca and bai are essential, though not redundant, for dorsoventral patterning of the embryo. Specifically required during early embryogenesis for the activity of maternal tkv, while the zygotic tkv is not affected. Involved in Golgi organization. This Drosophila sechellia (Fruit fly) protein is Transmembrane emp24 domain-containing protein eca.